A 188-amino-acid chain; its full sequence is Elongation factor P (188 aa).

At K34 the chain carries N6-(3,6-diaminohexanoyl)-5-hydroxylysine.

It belongs to the elongation factor P family. Post-translationally, may be beta-lysylated on the epsilon-amino group of Lys-34 by the combined action of EpmA and EpmB, and then hydroxylated on the C5 position of the same residue by EpmC (if this protein is present). Lysylation is critical for the stimulatory effect of EF-P on peptide-bond formation. The lysylation moiety may extend toward the peptidyltransferase center and stabilize the terminal 3-CCA end of the tRNA. Hydroxylation of the C5 position on Lys-34 may allow additional potential stabilizing hydrogen-bond interactions with the P-tRNA.

It localises to the cytoplasm. It functions in the pathway protein biosynthesis; polypeptide chain elongation. In terms of biological role, involved in peptide bond synthesis. Alleviates ribosome stalling that occurs when 3 or more consecutive Pro residues or the sequence PPG is present in a protein, possibly by augmenting the peptidyl transferase activity of the ribosome. Modification of Lys-34 is required for alleviation. This Xylella fastidiosa (strain M23) protein is Elongation factor P.